Here is a 359-residue protein sequence, read N- to C-terminus: Histamine H2 receptor (359 aa).

The Extracellular segment spans residues 1–22 (MAPNGTASSFCLDSTACKITIT). Asn4 carries an N-linked (GlcNAc...) asparagine glycan. A helical transmembrane segment spans residues 23–44 (VVLAVLILITVAGNVVVCLAVG). Over 45–57 (LNRRLRNLTNCFI) the chain is Cytoplasmic. Residues 58-81 (VSLAITDLLLGLLVLPFSAIYQLS) traverse the membrane as a helical segment. At 82–92 (CKWSFGKVFCN) the chain is on the extracellular side. Residues Cys91 and Cys174 are joined by a disulfide bond. The helical transmembrane segment at 93-114 (IYTSLDVMLCTASILNLFMISL) threads the bilayer. Residues 115-134 (DRYCAVMDPLRYPVLVTPVR) lie on the Cytoplasmic side of the membrane. A helical membrane pass occupies residues 135–159 (VAISLVLIWVISITLSFLSIHLGWN). The Extracellular segment spans residues 160 to 180 (SRNETSKGNHTTSKCKVQVNE). Residues 181-204 (VYGLVDGLVTFYLPLLIMCITYYR) form a helical membrane-spanning segment. Residues 205 to 234 (IFKVARDQAKRINHISSWKAATIREHKATV) are Cytoplasmic-facing. Residues 235 to 258 (TLAAVMGAFIICWFPYFTAFVYRG) traverse the membrane as a helical segment. Over 259–267 (LRGDDAINE) the chain is Extracellular. Residues 268 to 289 (VLEAIVLWLGYANSALNPILYA) traverse the membrane as a helical segment. Topologically, residues 290-359 (ALNRDFRTGY…VTAPQGATDR (70 aa)) are cytoplasmic. Cys305 is lipidated: S-palmitoyl cysteine. Residues 316–340 (SLRSNASQLSRTQSREPRQQEEKPL) are disordered. Residues 317-327 (LRSNASQLSRT) show a composition bias toward polar residues. The segment covering 328–340 (QSREPRQQEEKPL) has biased composition (basic and acidic residues).

This sequence belongs to the G-protein coupled receptor 1 family.

The protein resides in the cell membrane. In terms of biological role, the H2 subclass of histamine receptors mediates gastric acid secretion. Also appears to regulate gastrointestinal motility and intestinal secretion. Possible role in regulating cell growth and differentiation. The activity of this receptor is mediated by G proteins which activate adenylyl cyclase and, through a separate G protein-dependent mechanism, the phosphoinositide/protein kinase (PKC) signaling pathway. This is Histamine H2 receptor (HRH2) from Gorilla gorilla gorilla (Western lowland gorilla).